A 131-amino-acid polypeptide reads, in one-letter code: Aspartate 1-decarboxylase (131 aa).

S25 serves as the catalytic Schiff-base intermediate with substrate; via pyruvic acid. S25 is modified (pyruvic acid (Ser)). T57 provides a ligand contact to substrate. The active-site Proton donor is the Y58. Substrate is bound at residue 73-75 (GAA).

It belongs to the PanD family. Heterooctamer of four alpha and four beta subunits. The cofactor is pyruvate. Post-translationally, is synthesized initially as an inactive proenzyme, which is activated by self-cleavage at a specific serine bond to produce a beta-subunit with a hydroxyl group at its C-terminus and an alpha-subunit with a pyruvoyl group at its N-terminus.

It is found in the cytoplasm. It carries out the reaction L-aspartate + H(+) = beta-alanine + CO2. Its pathway is cofactor biosynthesis; (R)-pantothenate biosynthesis; beta-alanine from L-aspartate: step 1/1. Functionally, catalyzes the pyruvoyl-dependent decarboxylation of aspartate to produce beta-alanine. In Chlorobium phaeobacteroides (strain DSM 266 / SMG 266 / 2430), this protein is Aspartate 1-decarboxylase.